The primary structure comprises 183 residues: Efficient mitochondria targeting-associated protein 19 (183 aa).

At 1-25 (MKVVSLRRIYSSEIYKLPTTRLHMD) the chain is on the cytoplasmic side. Residues 24–156 (MDTLYYYYFV…PYLAIPLWMA (133 aa)) form the EXPERA domain. Residues 26-46 (TLYYYYFVSHLAAALFVDLPI) traverse the membrane as a helical segment. Topologically, residues 47 to 81 (TEWLGGSLSCLSGLRRFYLSTYEDPILLIPAPWKT) are lumenal. The chain crosses the membrane as a helical span at residues 82 to 102 (ALFSSELFFQVPFFIWVSLRL). At 103–110 (RKKARDPV) the chain is on the cytoplasmic side. Residues 111-131 (LWVAILIYGVHAFTTTWCCMF) traverse the membrane as a helical segment. Topologically, residues 132-138 (ELFAEKK) are lumenal. Residues 139–159 (WMIMSFYFPYLAIPLWMAIDM) form a helical membrane-spanning segment. Topologically, residues 160-183 (GGRLVKSCHAAKSGPSSTITSKSD) are cytoplasmic.

The protein belongs to the TMEM97/sigma-2 receptor family.

The protein resides in the endoplasmic reticulum membrane. Functionally, part of an import route for newly synthesized mitochondrial proteins termed the ER-SURF pathway (ER surface-mediated protein targeting), which retrieves mitochondrial precursor proteins from the ER surface and reroutes them to mitochondria for efficient mitochondrial import. Acts as a quality control factor in the ER, promoting the proteolytic degradation of nonproductive and extramitochondrial precursor proteins in the ER membrane thus removing them from the ER surface. In Schizosaccharomyces pombe (strain 972 / ATCC 24843) (Fission yeast), this protein is Efficient mitochondria targeting-associated protein 19 (ema19).